Here is a 257-residue protein sequence, read N- to C-terminus: Thiazole synthase (257 aa).

The active-site Schiff-base intermediate with DXP is Lys97. 1-deoxy-D-xylulose 5-phosphate is bound by residues Gly158, 184-185 (AG), and 206-207 (NT).

It belongs to the ThiG family. As to quaternary structure, homotetramer. Forms heterodimers with either ThiH or ThiS.

The protein resides in the cytoplasm. The enzyme catalyses [ThiS sulfur-carrier protein]-C-terminal-Gly-aminoethanethioate + 2-iminoacetate + 1-deoxy-D-xylulose 5-phosphate = [ThiS sulfur-carrier protein]-C-terminal Gly-Gly + 2-[(2R,5Z)-2-carboxy-4-methylthiazol-5(2H)-ylidene]ethyl phosphate + 2 H2O + H(+). Its pathway is cofactor biosynthesis; thiamine diphosphate biosynthesis. Catalyzes the rearrangement of 1-deoxy-D-xylulose 5-phosphate (DXP) to produce the thiazole phosphate moiety of thiamine. Sulfur is provided by the thiocarboxylate moiety of the carrier protein ThiS. In vitro, sulfur can be provided by H(2)S. The chain is Thiazole synthase from Phocaeicola vulgatus (strain ATCC 8482 / DSM 1447 / JCM 5826 / CCUG 4940 / NBRC 14291 / NCTC 11154) (Bacteroides vulgatus).